The primary structure comprises 295 residues: Bifunctional protein FolD (295 aa).

NADP(+)-binding positions include 164–166, Ser-193, and Ile-234; that span reads GRS.

The protein belongs to the tetrahydrofolate dehydrogenase/cyclohydrolase family. As to quaternary structure, homodimer.

It catalyses the reaction (6R)-5,10-methylene-5,6,7,8-tetrahydrofolate + NADP(+) = (6R)-5,10-methenyltetrahydrofolate + NADPH. The catalysed reaction is (6R)-5,10-methenyltetrahydrofolate + H2O = (6R)-10-formyltetrahydrofolate + H(+). It participates in one-carbon metabolism; tetrahydrofolate interconversion. Catalyzes the oxidation of 5,10-methylenetetrahydrofolate to 5,10-methenyltetrahydrofolate and then the hydrolysis of 5,10-methenyltetrahydrofolate to 10-formyltetrahydrofolate. This is Bifunctional protein FolD from Flavobacterium johnsoniae (strain ATCC 17061 / DSM 2064 / JCM 8514 / BCRC 14874 / CCUG 350202 / NBRC 14942 / NCIMB 11054 / UW101) (Cytophaga johnsonae).